The sequence spans 189 residues: MRSKTITFPVLKLTGQSQALTNDMHKNADHTVPGLTVATGHLIAEALQMRLQGLNELALILKHAHWNVVGPQFIAVHEMLDSQVDEVRDFIDEIAERMATLGVAPNGLSGNLVETRQSPEYPLGRATAQDHLKLIDLYYSHNIEAHRVVLEHNGHLDPISEDLLVAQTRSLEKLQWFIRAHLDNGNGNI.

Belongs to the Dps family. In terms of assembly, hexamer.

The protein localises to the fimbrium. In terms of biological role, may contribute to bacterial adherence, or be involved in the protection of the bacteria, or both. The polypeptide is Fine tangled pili major subunit (ftpA) (Haemophilus ducreyi (strain 35000HP / ATCC 700724)).